We begin with the raw amino-acid sequence, 181 residues long: ADP-ribosylation factor 3 (181 aa).

Gly2 carries the N-myristoyl glycine lipid modification. Residues 24–31 (GLDAAGKT), 67–71 (DVGGQ), and 126–129 (NKQD) each bind GTP.

Belongs to the small GTPase superfamily. Arf family. Interacts with PRKCABP. Interacts with PI4KB and NCS1/FREQ at the Golgi complex.

The protein localises to the golgi apparatus. The protein resides in the cytoplasm. It localises to the perinuclear region. Functionally, GTP-binding protein that functions as an allosteric activator of the cholera toxin catalytic subunit, an ADP-ribosyltransferase. Involved in protein trafficking; may modulate vesicle budding and uncoating within the Golgi apparatus. The protein is ADP-ribosylation factor 3 (ARF3) of Bos taurus (Bovine).